The chain runs to 371 residues: Cysteine endopeptidase Rep1 (371 aa).

The signal sequence occupies residues 1–28; sequence MGRVISSWRVLAVVAALMAMAAVELCAA. The propeptide at 29-133 is activation peptide; it reads IPFDERDLES…LPGFMYEGVR (105 aa). Disulfide bonds link Cys156–Cys198, Cys190–Cys231, and Cys290–Cys342. The active site involves Cys159. A glycan (N-linked (GlcNAc...) asparagine) is linked at Asn228. Catalysis depends on residues His296 and Asn317.

This sequence belongs to the peptidase C1 family. As to expression, expressed in germinating seeds.

The protein localises to the protein storage vacuole. Functionally, cysteine endopeptidase that digests in vitro both the acidic and basic subunits of glutelin, the major seed storage protein of rice. Acts as a negative regulator of cell death. This Oryza sativa subsp. japonica (Rice) protein is Cysteine endopeptidase Rep1.